Consider the following 253-residue polypeptide: Phycoerythrobilin:ferredoxin oxidoreductase (253 aa).

The protein belongs to the HY2 family.

The catalysed reaction is (3Z)-phycoerythrobilin + oxidized 2[4Fe-4S]-[ferredoxin] = 15,16-dihydrobiliverdin + reduced 2[4Fe-4S]-[ferredoxin] + 2 H(+). Catalyzes the two-electron reduction of the C2 and C3(1) diene system of 15,16-dihydrobiliverdin. This Prochlorococcus marinus (strain MIT 9312) protein is Phycoerythrobilin:ferredoxin oxidoreductase.